The sequence spans 388 residues: Probable E3 ubiquitin-protein ligase LOG2 (388 aa).

A disordered region spans residues 1-43 (MGNISSSGGEGRRRRRRNHTAAPPPPPPPPSSSLPPPPLPTEI). The N-myristoyl glycine moiety is linked to residue glycine 2. Residues 22–40 (APPPPPPPPSSSLPPPPLP) are compositionally biased toward pro residues. Residues 159 to 281 (FTFDATVSGR…GEIKIRVVKQ (123 aa)) form a DAR2 domain region. The RING-type; atypical zinc-finger motif lies at 319 to 358 (CVICLSEPRDTTVLPCRHMCMCSGCAKVLRFQTNRCPICR). Residues 368-388 (KVHGNNGSGNNTGQGETVEQE) form a disordered region.

It belongs to the RING-type zinc finger family. LOG2 subfamily. In terms of assembly, interacts with GDU1. Post-translationally, myristoylated (in vitro). In terms of tissue distribution, expressed in the vascular tissues in both phloem and xylem parenchyma cells.

It is found in the cell membrane. It catalyses the reaction S-ubiquitinyl-[E2 ubiquitin-conjugating enzyme]-L-cysteine + [acceptor protein]-L-lysine = [E2 ubiquitin-conjugating enzyme]-L-cysteine + N(6)-ubiquitinyl-[acceptor protein]-L-lysine.. It participates in protein modification; protein ubiquitination. Functionally, acts as an E3 ubiquitin-protein ligase, or as part of E3 complex, which accepts ubiquitin from specific E2 ubiquitin-conjugating enzymes and then transfers it to substrates (in vitro). Required for GLUTAMINE DUMPER 1(GDU1)-induced amino acid secretion and for amino acid homeostasis. Ubiquitinates GDU1 (in vitro). This Arabidopsis thaliana (Mouse-ear cress) protein is Probable E3 ubiquitin-protein ligase LOG2 (LOG2).